The sequence spans 258 residues: Phosphate import ATP-binding protein PstB (258 aa).

Residues 5–247 (LDLKDVNIYY…EKIFSNPRQK (243 aa)) enclose the ABC transporter domain. Residue 37 to 44 (GPSGCGKS) coordinates ATP.

Belongs to the ABC transporter superfamily. Phosphate importer (TC 3.A.1.7) family. In terms of assembly, the complex is composed of two ATP-binding proteins (PstB), two transmembrane proteins (PstC and PstA) and a solute-binding protein (PstS).

It localises to the cell membrane. The catalysed reaction is phosphate(out) + ATP + H2O = ADP + 2 phosphate(in) + H(+). In terms of biological role, part of the ABC transporter complex PstSACB involved in phosphate import. Responsible for energy coupling to the transport system. This Mycolicibacterium smegmatis (Mycobacterium smegmatis) protein is Phosphate import ATP-binding protein PstB.